Here is a 199-residue protein sequence, read N- to C-terminus: UPF0301 protein Daci_1578 (199 aa).

It belongs to the UPF0301 (AlgH) family.

The protein is UPF0301 protein Daci_1578 of Delftia acidovorans (strain DSM 14801 / SPH-1).